Reading from the N-terminus, the 339-residue chain is UPF0450 protein C17orf58 (339 aa).

The signal sequence occupies residues 1 to 17; that stretch reads MTARAFWLLCLIVGSSP. A disordered region spans residues 17-191; the sequence is PEAPVAERKT…PQRDAEPGAE (175 aa). Residues 21–36 are compositionally biased toward basic and acidic residues; it reads VAERKTSPPHSRKPDS. The segment covering 56-72 has biased composition (low complexity); sequence APQRPRAAEVAPAARAW. Positions 112–125 are enriched in basic and acidic residues; that stretch reads ASPRREPASEDAPR. Over residues 132-163 the composition is skewed to low complexity; that stretch reads LRFPAARPPALATEGSAGHAHPNRPRAAALAP. 3 disulfide bridges follow: Cys193-Cys267, Cys197-Cys271, and Cys208-Cys338. An NTR domain is found at 193–338; the sequence is CARACRSDLD…QIQGAIHTQC (146 aa).

It belongs to the UPF0450 family.

The chain is UPF0450 protein C17orf58 (C17orf58) from Homo sapiens (Human).